A 519-amino-acid polypeptide reads, in one-letter code: Golgi-associated kinase 1B (519 aa).

At 1–37 (MTCPDKPGQLINWFICSLCVPRVRKLWSSRRPRTRRN) the chain is on the cytoplasmic side. Residues 38–55 (LLLGTACAIYLGFLVSQV) form a helical; Signal-anchor for type II membrane protein membrane-spanning segment. Residues 56 to 519 (GRASLQHGQA…HGVKVLPMNE (464 aa)) are Extracellular-facing. Residues 62-103 (HGQAAEKGPHRSRDTAEPSFPEIPLDGTLAPPESQGNGSTLQ) form a disordered region. The segment covering 68-77 (KGPHRSRDTA) has biased composition (basic and acidic residues). An N-linked (GlcNAc...) asparagine glycan is attached at Asn289.

This sequence belongs to the GASK family.

The protein resides in the golgi apparatus membrane. This Homo sapiens (Human) protein is Golgi-associated kinase 1B.